The primary structure comprises 48 residues: Thiamine thiazole synthase, chloroplastic (48 aa).

Residues Ala-18 and Val-40 each contribute to the substrate site.

It belongs to the THI4 family. Homooctamer. Fe cation serves as cofactor.

The protein localises to the plastid. Its subcellular location is the chloroplast. The catalysed reaction is [ADP-thiazole synthase]-L-cysteine + glycine + NAD(+) = [ADP-thiazole synthase]-dehydroalanine + ADP-5-ethyl-4-methylthiazole-2-carboxylate + nicotinamide + 3 H2O + 2 H(+). Its function is as follows. Involved in biosynthesis of the thiamine precursor thiazole. Catalyzes the conversion of NAD and glycine to adenosine diphosphate 5-(2-hydroxyethyl)-4-methylthiazole-2-carboxylic acid (ADT), an adenylated thiazole intermediate. The reaction includes an iron-dependent sulfide transfer from a conserved cysteine residue of the protein to a thiazole intermediate. The enzyme can only undergo a single turnover, which suggests it is a suicide enzyme. May have additional roles in adaptation to various stress conditions and in DNA damage tolerance. The chain is Thiamine thiazole synthase, chloroplastic (THI1) from Populus euphratica (Euphrates poplar).